Reading from the N-terminus, the 364-residue chain is Leucine-rich repeat-containing protein 19 (364 aa).

Positions Met1–Ser20 are cleaved as a signal peptide. Over Gln21 to Trp264 the chain is Extracellular. N-linked (GlcNAc...) asparagine glycosylation is found at Asn30, Asn35, Asn46, and Asn88. LRR repeat units lie at residues Ser44–Met69, Tyr70–Asn93, Leu94–Gly117, Leu118–Pro141, Asn143–Leu163, and Pro164–Asn190. In terms of domain architecture, LRRCT spans Asn174–His225. 7 N-linked (GlcNAc...) asparagine glycosylation sites follow: Asn177, Asn190, Asn193, Asn200, Asn241, Asn245, and Asn250. The helical transmembrane segment at Ala265–Ile285 threads the bilayer. Residues Lys286–Lys364 are Cytoplasmic-facing.

In terms of assembly, interacts with TRAF2 and TRAF6. In terms of tissue distribution, strongly expressed in kidney, also expressed in spleen, intestine and colon. Highly expressed in epithelial cells. In kidney, mainly expressed in renal collecting duct epithelial cells.

It is found in the membrane. Its activity is regulated as follows. Activated by TLR ligands such as LPS, bacterial DNA and peptidoglycan. Pathogen-recognition receptor which mediates the activation of TRAF2- and TRAF6 NF-kappa-B signaling pathways and induces the expression of pro-inflammatory cytokines. In kidney, prevents infection by uropathogenic bacteria by inducing the production of cytokines, chemokines and antimicrobial substances. In gut, involved in host-microbiota interactions, plays a critical role in promoting the recruitment of immune cells and intestinal inflammation. The polypeptide is Leucine-rich repeat-containing protein 19 (Mus musculus (Mouse)).